Reading from the N-terminus, the 533-residue chain is CTP synthase (533 aa).

An amidoligase domain region spans residues 1–265; that stretch reads MTKFIFVTGG…PAYLARRLGL (265 aa). A CTP-binding site is contributed by serine 13. Serine 13 is a binding site for UTP. 14–19 is an ATP binding site; it reads GLGKGI. Tyrosine 54 lines the L-glutamine pocket. ATP is bound at residue aspartate 71. Residues aspartate 71 and glutamate 139 each contribute to the Mg(2+) site. CTP-binding positions include 146–148, 186–191, and lysine 222; these read DIE and KTKPTQ. Residues 186 to 191 and lysine 222 contribute to the UTP site; that span reads KTKPTQ. In terms of domain architecture, Glutamine amidotransferase type-1 spans 290–532; the sequence is EIAIVGKYVK…VEAAKKKKYG (243 aa). Glycine 351 is an L-glutamine binding site. Cysteine 378 acts as the Nucleophile; for glutamine hydrolysis in catalysis. L-glutamine is bound by residues 379 to 382, glutamate 402, and arginine 459; that span reads FGFQ. Catalysis depends on residues histidine 505 and glutamate 507.

It belongs to the CTP synthase family. In terms of assembly, homotetramer.

It catalyses the reaction UTP + L-glutamine + ATP + H2O = CTP + L-glutamate + ADP + phosphate + 2 H(+). The catalysed reaction is L-glutamine + H2O = L-glutamate + NH4(+). The enzyme catalyses UTP + NH4(+) + ATP = CTP + ADP + phosphate + 2 H(+). The protein operates within pyrimidine metabolism; CTP biosynthesis via de novo pathway; CTP from UDP: step 2/2. Its activity is regulated as follows. Allosterically activated by GTP, when glutamine is the substrate; GTP has no effect on the reaction when ammonia is the substrate. The allosteric effector GTP functions by stabilizing the protein conformation that binds the tetrahedral intermediate(s) formed during glutamine hydrolysis. Inhibited by the product CTP, via allosteric rather than competitive inhibition. In terms of biological role, catalyzes the ATP-dependent amination of UTP to CTP with either L-glutamine or ammonia as the source of nitrogen. Regulates intracellular CTP levels through interactions with the four ribonucleotide triphosphates. The protein is CTP synthase of Thermococcus kodakarensis (strain ATCC BAA-918 / JCM 12380 / KOD1) (Pyrococcus kodakaraensis (strain KOD1)).